The primary structure comprises 562 residues: Endoglucanase E1 (562 aa).

An N-terminal signal peptide occupies residues 1 to 41; it reads MPRALRRVPGSRVMLRVGVVVAVLALVAALANLAVPRPARA. A catalytic region spans residues 42 to 400; sequence AGGGYWHTSG…IKSSIFDPVG (359 aa). A disulfide bridge connects residues C75 and C161. E203 (proton donor) is an active-site residue. A disulfide bond links C209 and C212. The active-site Nucleophile is the E323. The disordered stretch occupies residues 399-462; sequence VGASASPSSQ…PTPSPTAASG (64 aa). 2 stretches are compositionally biased toward low complexity: residues 401 to 411 and 437 to 449; these read ASASPSSQPSP and PTPTLTPTATPTP. The region spanning 458–562 is the CBM2 domain; it reads TAASGARCTA…AAPTVACAAS (105 aa).

The protein belongs to the glycosyl hydrolase 5 (cellulase A) family.

It catalyses the reaction Endohydrolysis of (1-&gt;4)-beta-D-glucosidic linkages in cellulose, lichenin and cereal beta-D-glucans.. Its function is as follows. Has a very high specific activity on carboxymethylcellulose. The chain is Endoglucanase E1 from Acidothermus cellulolyticus (strain ATCC 43068 / DSM 8971 / 11B).